The primary structure comprises 339 residues: Alcohol dehydrogenase (339 aa).

Positions 38, 61, 92, 95, 98, 106, and 148 each coordinate Zn(2+). NAD(+)-binding positions include 172 to 177, Asp195, Lys200, 260 to 262, and Arg331; these read GIGGLG and VGL.

Belongs to the zinc-containing alcohol dehydrogenase family. Zn(2+) is required as a cofactor.

It catalyses the reaction a primary alcohol + NAD(+) = an aldehyde + NADH + H(+). The enzyme catalyses a secondary alcohol + NAD(+) = a ketone + NADH + H(+). Its activity is regulated as follows. The rate-limiting step is NADH release. Catabolite repression. Functionally, active with primary alcohols, including methanol. This chain is Alcohol dehydrogenase (adh), found in Geobacillus stearothermophilus (Bacillus stearothermophilus).